The primary structure comprises 864 residues: Leucine--tRNA ligase (864 aa).

The 'HIGH' region signature appears at 42-52 (PYPSGKLHMGH). A 'KMSKS' region motif is present at residues 624-628 (KMSKS). Residue K627 participates in ATP binding.

Belongs to the class-I aminoacyl-tRNA synthetase family.

It localises to the cytoplasm. It carries out the reaction tRNA(Leu) + L-leucine + ATP = L-leucyl-tRNA(Leu) + AMP + diphosphate. In Burkholderia cenocepacia (strain ATCC BAA-245 / DSM 16553 / LMG 16656 / NCTC 13227 / J2315 / CF5610) (Burkholderia cepacia (strain J2315)), this protein is Leucine--tRNA ligase.